The chain runs to 441 residues: 4-hydroxybenzoate polyprenyltransferase, mitochondrial (441 aa).

The N-terminal 95 residues, 1-95 (MLRKLTSNSS…TLGELVLRDY (95 aa)), are a transit peptide targeting the mitochondrion. 8 consecutive transmembrane segments (helical) span residues 129–149 (IGSW…APAG), 154–174 (LWTL…GCTI), 204–224 (AWFF…ELNW), 225–245 (YSIV…LMKR), 246–266 (ITHW…LLGW), 271–291 (GSVM…WTIV), 322–342 (LWLS…GMVC), and 378–398 (FISN…GTLY). Residues 405–441 (AGKSSTTSSSSTSSSSSPSSGLLLAATNHHQPARQAS) form a disordered region. Residues 408–424 (SSTTSSSSTSSSSSPSS) are compositionally biased toward low complexity. Residues 432-441 (NHHQPARQAS) are compositionally biased toward polar residues.

This sequence belongs to the UbiA prenyltransferase family. It depends on Mg(2+) as a cofactor.

Its subcellular location is the mitochondrion inner membrane. The enzyme catalyses an all-trans-polyprenyl diphosphate + 4-hydroxybenzoate = a 4-hydroxy-3-(all-trans-polyprenyl)benzoate + diphosphate. Its pathway is cofactor biosynthesis; ubiquinone biosynthesis. Catalyzes the prenylation of para-hydroxybenzoate (PHB) with an all-trans polyprenyl group. Mediates the second step in the final reaction sequence of coenzyme Q (CoQ) biosynthesis, which is the condensation of the polyisoprenoid side chain with PHB, generating the first membrane-bound Q intermediate. The sequence is that of 4-hydroxybenzoate polyprenyltransferase, mitochondrial from Aedes aegypti (Yellowfever mosquito).